Here is a 440-residue protein sequence, read N- to C-terminus: Exodeoxyribonuclease 7 large subunit (440 aa).

It belongs to the XseA family. In terms of assembly, heterooligomer composed of large and small subunits.

It localises to the cytoplasm. The enzyme catalyses Exonucleolytic cleavage in either 5'- to 3'- or 3'- to 5'-direction to yield nucleoside 5'-phosphates.. In terms of biological role, bidirectionally degrades single-stranded DNA into large acid-insoluble oligonucleotides, which are then degraded further into small acid-soluble oligonucleotides. This chain is Exodeoxyribonuclease 7 large subunit, found in Ralstonia nicotianae (strain ATCC BAA-1114 / GMI1000) (Ralstonia solanacearum).